We begin with the raw amino-acid sequence, 170 residues long: Small ribosomal subunit protein bS16 (170 aa).

Positions 109-170 are disordered; sequence ALAEAEGGPS…AAESEAPAAE (62 aa). Residues 131-150 are compositionally biased toward basic and acidic residues; that stretch reads AKKDEQPTEKAAEPAAEKAA. Low complexity predominate over residues 151 to 170; sequence EPAAEAPAEAAAESEAPAAE.

This sequence belongs to the bacterial ribosomal protein bS16 family.

The chain is Small ribosomal subunit protein bS16 from Mycolicibacterium gilvum (strain PYR-GCK) (Mycobacterium gilvum (strain PYR-GCK)).